Consider the following 743-residue polypeptide: MLHFNRCHHLKKITQKCFSSIHVKTDKHAQRFLSRTFALAELRKSWYSTHSLVGDKNIILMGPPGAGKTTVGRIIGQKLGCCVIDVDDDILEKTWNMSVSEKLQDVGNEQFLEEEGKAVLNFSASGSVISLTGSNPMHDASMWHLKKNGIIVYLDVPLLDLICRLKLMKTDRIVGQNSGTSMKDLLKFRRQYYKKWYDARVFCESGASPEEVADKVLNAIKRYQDVDSETFISTRHVWPEDCEQKVSAKFFSEAVIEGLASDGGLFVPAKEFPKLSCGEWKSLVGATYVERAQILLERCIHPADIPAARLGEMIETAYGENFACSKIAPVRHLSGNQFILELFHGPTGSFKDLSLQLMPHIFAHCIPPSCNYMILVATSGDTGSAVLNGFSRLNKNDKQRIAVVAFFPENGVSDFQKAQIIGSQRENGWAVGVESDFDFCQTAIKRIFNDSDFTGFLTVEYGTILSSANSINWGRLLPQVVYHASAYLDLVSQGFISFGSPVDVCIPTGNFGNILAAVYAKMMGIPIRKFICASNQNHVLTDFIKTGHYDLRERKLAQTFSPSIDILKSSNLERHLHLMANKDGQLMTELFNRLESQHHFQIEKALVEKLQQDFVADWCSEGECLAAINSTYNTSGYILDPHTAVAKVVADRVQDKTCPVIISSTAHYSKFAPAIMQALKIKEINETSSSQLYLLGSYNALPPLHEALLERTKQQEKMEYQVCAADMNVLKSHVEQLVQNQFI.

The residue at position 281 (Lys281) is an N6-acetyllysine. The residue at position 351 (Lys351) is an N6-(pyridoxal phosphate)lysine.

This sequence belongs to the threonine synthase family. Pyridoxal 5'-phosphate is required as a cofactor.

In Homo sapiens (Human), this protein is Threonine synthase-like 1 (THNSL1).